Reading from the N-terminus, the 406-residue chain is Argininosuccinate synthase (406 aa).

8-16 (AYSGGLDTS) provides a ligand contact to ATP. Tyr-86 lines the L-citrulline pocket. Gly-116 contacts ATP. 3 residues coordinate L-aspartate: Thr-118, Asn-122, and Asp-123. Asn-122 is a binding site for L-citrulline. The L-citrulline site is built by Arg-126, Ser-174, Ser-183, Glu-259, and Tyr-271.

Belongs to the argininosuccinate synthase family. Type 1 subfamily. As to quaternary structure, homotetramer.

It is found in the cytoplasm. It carries out the reaction L-citrulline + L-aspartate + ATP = 2-(N(omega)-L-arginino)succinate + AMP + diphosphate + H(+). The protein operates within amino-acid biosynthesis; L-arginine biosynthesis; L-arginine from L-ornithine and carbamoyl phosphate: step 2/3. The polypeptide is Argininosuccinate synthase (Dehalococcoides mccartyi (strain ATCC BAA-2266 / KCTC 15142 / 195) (Dehalococcoides ethenogenes (strain 195))).